Consider the following 145-residue polypeptide: Protein SprT-like (145 aa).

In terms of domain architecture, SprT-like spans 4–141 (TDYVKEVSRQ…CGNCHGKLRH (138 aa)). Residue His-64 participates in Zn(2+) binding. The active site involves Glu-65. His-68 contributes to the Zn(2+) binding site.

This sequence belongs to the SprT family. The cofactor is Zn(2+).

It is found in the cytoplasm. In Streptococcus mutans serotype c (strain ATCC 700610 / UA159), this protein is Protein SprT-like.